A 148-amino-acid chain; its full sequence is Large ribosomal subunit protein bL9 (148 aa).

The protein belongs to the bacterial ribosomal protein bL9 family.

Functionally, binds to the 23S rRNA. This Bacillus cytotoxicus (strain DSM 22905 / CIP 110041 / 391-98 / NVH 391-98) protein is Large ribosomal subunit protein bL9.